The primary structure comprises 1252 residues: DNA-directed RNA polymerase subunit beta (1252 aa).

The protein belongs to the RNA polymerase beta chain family. The RNAP catalytic core consists of 2 alpha, 1 beta, 1 beta' and 1 omega subunit. When a sigma factor is associated with the core the holoenzyme is formed, which can initiate transcription.

The enzyme catalyses RNA(n) + a ribonucleoside 5'-triphosphate = RNA(n+1) + diphosphate. In terms of biological role, DNA-dependent RNA polymerase catalyzes the transcription of DNA into RNA using the four ribonucleoside triphosphates as substrates. The polypeptide is DNA-directed RNA polymerase subunit beta (Chlamydia trachomatis serovar D (strain ATCC VR-885 / DSM 19411 / UW-3/Cx)).